A 205-amino-acid chain; its full sequence is uncharacterized protein (205 aa).

A run of 2 helical transmembrane segments spans residues 12 to 32 (WQIY…GVGF) and 49 to 69 (WISS…VMSW).

The protein resides in the host membrane. This is an uncharacterized protein from Haemophilus influenzae (Bacteriophage HP1).